Here is a 319-residue protein sequence, read N- to C-terminus: MSLNFLDFEQPIAELEAKIDSLTAVSRQDEKLDINIDEEVHRLREKSVELTRKIFADLGAWQVAQLARHPQRPYTLDYVRLAFDEFDELAGDRAYADDKAIVGGIARLEGRPVMIIGHQKGRETKEKIRRNFGMPAPEGYRKALRLMEMAERFNMPIITFIDTPGAYPGVGAEERGQSEAIARNLREMSRLNVPVICTVIGEGGSGGALAIGVGDKVNMLQYSTYSVISPEGCASILWKSANKAPLAAEAMGIIAPRLKELKLIDSIIPEPLGGAHRNPEAMAASLKAQLLEDLADLDVLSTDDLKNRRYQRLMSYGYA.

Positions 35-296 (NIDEEVHRLR…KAQLLEDLAD (262 aa)) constitute a CoA carboxyltransferase C-terminal domain.

Belongs to the AccA family. In terms of assembly, acetyl-CoA carboxylase is a heterohexamer composed of biotin carboxyl carrier protein (AccB), biotin carboxylase (AccC) and two subunits each of ACCase subunit alpha (AccA) and ACCase subunit beta (AccD).

It localises to the cytoplasm. The catalysed reaction is N(6)-carboxybiotinyl-L-lysyl-[protein] + acetyl-CoA = N(6)-biotinyl-L-lysyl-[protein] + malonyl-CoA. It functions in the pathway lipid metabolism; malonyl-CoA biosynthesis; malonyl-CoA from acetyl-CoA: step 1/1. Component of the acetyl coenzyme A carboxylase (ACC) complex. First, biotin carboxylase catalyzes the carboxylation of biotin on its carrier protein (BCCP) and then the CO(2) group is transferred by the carboxyltransferase to acetyl-CoA to form malonyl-CoA. This chain is Acetyl-coenzyme A carboxylase carboxyl transferase subunit alpha, found in Salmonella dublin (strain CT_02021853).